The following is a 366-amino-acid chain: tRNA 2-selenouridine synthase (366 aa).

Residues 12 to 136 enclose the Rhodanese domain; that stretch reads FLSGTPMMDV…MRGFLIDVIE (125 aa). C95 (S-selanylcysteine intermediate) is an active-site residue.

This sequence belongs to the SelU family. In terms of assembly, monomer.

The enzyme catalyses 5-methylaminomethyl-2-thiouridine(34) in tRNA + selenophosphate + (2E)-geranyl diphosphate + H2O + H(+) = 5-methylaminomethyl-2-selenouridine(34) in tRNA + (2E)-thiogeraniol + phosphate + diphosphate. The catalysed reaction is 5-methylaminomethyl-2-thiouridine(34) in tRNA + (2E)-geranyl diphosphate = 5-methylaminomethyl-S-(2E)-geranyl-thiouridine(34) in tRNA + diphosphate. It carries out the reaction 5-methylaminomethyl-S-(2E)-geranyl-thiouridine(34) in tRNA + selenophosphate + H(+) = 5-methylaminomethyl-2-(Se-phospho)selenouridine(34) in tRNA + (2E)-thiogeraniol. It catalyses the reaction 5-methylaminomethyl-2-(Se-phospho)selenouridine(34) in tRNA + H2O = 5-methylaminomethyl-2-selenouridine(34) in tRNA + phosphate. Its function is as follows. Involved in the post-transcriptional modification of the uridine at the wobble position (U34) of tRNA(Lys), tRNA(Glu) and tRNA(Gln). Catalyzes the conversion of 2-thiouridine (S2U-RNA) to 2-selenouridine (Se2U-RNA). Acts in a two-step process involving geranylation of 2-thiouridine (S2U) to S-geranyl-2-thiouridine (geS2U) and subsequent selenation of the latter derivative to 2-selenouridine (Se2U) in the tRNA chain. This is tRNA 2-selenouridine synthase from Cupriavidus pinatubonensis (strain JMP 134 / LMG 1197) (Cupriavidus necator (strain JMP 134)).